The following is a 513-amino-acid chain: Probable G-protein coupled receptor Mth-like 9 (513 aa).

The signal sequence occupies residues 1-19 (MVSPLIILLIIWLSVGAKS). Residues 20–207 (VEIASINHPC…NCERFQTGYR (188 aa)) are Extracellular-facing. 4 cysteine pairs are disulfide-bonded: cysteine 29–cysteine 82, cysteine 84–cysteine 89, cysteine 93–cysteine 181, and cysteine 94–cysteine 107. N-linked (GlcNAc...) asparagine glycosylation is present at asparagine 36. 3 N-linked (GlcNAc...) asparagine glycosylation sites follow: asparagine 106, asparagine 125, and asparagine 165. A helical membrane pass occupies residues 208-228 (VWIYAICSIIAIIINIFILSL). The Cytoplasmic segment spans residues 229 to 242 (LGSVRDARKSHYGQ). The chain crosses the membrane as a helical span at residues 243 to 263 (LIIYYLLSMIVGYSLLVYLAL). Over 264 to 276 (KNPMKLSHVACRN) the chain is Extracellular. A helical membrane pass occupies residues 277 to 297 (IGFLAYFCIMLSFVFLAICSL). Residues 298-314 (DFLLKFKQKAVRSSVRR) lie on the Cytoplasmic side of the membrane. The chain crosses the membrane as a helical span at residues 315-335 (LSLALAVLAVIGLRFLVSLAQ). The Extracellular portion of the chain corresponds to 336–360 (DSKLPKHFKPGMGEDYCWFDVRTWG). The helical transmembrane segment at 361–381 (ILIYYYGPIALLLIFSIVCCL) threads the bilayer. At 382-403 (KAYFSIYELPPDTQYILGTQLK) the chain is on the cytoplasmic side. A helical membrane pass occupies residues 404–424 (IVKTHFYAFSAYIVGVFAVWI). Over 425–438 (REIVVYIMARVREH) the chain is Extracellular. Residues 439–459 (FFIIDFWSGICILGLAIAGFI) traverse the membrane as a helical segment. Residues 460-513 (LLLGKNLHVKSWWAINVESSQTDLSIINARVYKFDEKGDLKSSDSPYKPTVTSL) are Cytoplasmic-facing.

The protein belongs to the G-protein coupled receptor 2 family. Mth subfamily.

The protein localises to the cell membrane. The polypeptide is Probable G-protein coupled receptor Mth-like 9 (mthl9) (Drosophila melanogaster (Fruit fly)).